The primary structure comprises 288 residues: tRNA-cytidine(32) 2-sulfurtransferase (288 aa).

The PP-loop motif signature appears at 70–75 (SGGKDS). Residues C145, C148, and C236 each contribute to the [4Fe-4S] cluster site.

The protein belongs to the TtcA family. As to quaternary structure, homodimer. Requires Mg(2+) as cofactor. The cofactor is [4Fe-4S] cluster.

Its subcellular location is the cytoplasm. The catalysed reaction is cytidine(32) in tRNA + S-sulfanyl-L-cysteinyl-[cysteine desulfurase] + AH2 + ATP = 2-thiocytidine(32) in tRNA + L-cysteinyl-[cysteine desulfurase] + A + AMP + diphosphate + H(+). It functions in the pathway tRNA modification. Its function is as follows. Catalyzes the ATP-dependent 2-thiolation of cytidine in position 32 of tRNA, to form 2-thiocytidine (s(2)C32). The sulfur atoms are provided by the cysteine/cysteine desulfurase (IscS) system. This is tRNA-cytidine(32) 2-sulfurtransferase from Bartonella tribocorum (strain CIP 105476 / IBS 506).